The following is a 278-amino-acid chain: Tryptophan synthase alpha chain (278 aa).

Active-site proton acceptor residues include Glu-50 and Asp-61.

The protein belongs to the TrpA family. As to quaternary structure, tetramer of two alpha and two beta chains.

It catalyses the reaction (1S,2R)-1-C-(indol-3-yl)glycerol 3-phosphate + L-serine = D-glyceraldehyde 3-phosphate + L-tryptophan + H2O. Its pathway is amino-acid biosynthesis; L-tryptophan biosynthesis; L-tryptophan from chorismate: step 5/5. Its function is as follows. The alpha subunit is responsible for the aldol cleavage of indoleglycerol phosphate to indole and glyceraldehyde 3-phosphate. The chain is Tryptophan synthase alpha chain from Rhodopseudomonas palustris (strain BisB5).